Consider the following 645-residue polypeptide: UPF0313 protein CLM_0251 (645 aa).

One can recognise a Radical SAM core domain in the interval 295-566 (AIKEVKFSIT…RMQRALLQFS (272 aa)). The [4Fe-4S] cluster site is built by cysteine 309, cysteine 313, and cysteine 316. The interval 598–645 (NKPYKKSHKKNNAKNNNNHYNKNNNYNKNKDISKKNKKNSLSKHKKRK) is disordered. Residues 600–609 (PYKKSHKKNN) are compositionally biased toward basic residues. A compositionally biased stretch (low complexity) spans 610–624 (AKNNNNHYNKNNNYN). Residues 632 to 645 (KNKKNSLSKHKKRK) are compositionally biased toward basic residues.

Belongs to the UPF0313 family. [4Fe-4S] cluster serves as cofactor.

The polypeptide is UPF0313 protein CLM_0251 (Clostridium botulinum (strain Kyoto / Type A2)).